Here is a 103-residue protein sequence, read N- to C-terminus: MAGGKGGKGMGKVGAKRHSRKSNKASIEGITKPAIRRLARRGGVKRISSFIYDDSRQVLKSFLENVVRDAVTYTEHARRKTVTAMDVVYALKRQGRTLYGFGG.

Positions 1-12 are enriched in gly residues; sequence MAGGKGGKGMGK. Residues 1-29 form a disordered region; sequence MAGGKGGKGMGKVGAKRHSRKSNKASIEG. 4 positions are modified to N6-acetyllysine: Lys5, Lys8, Lys12, and Lys16. Residues 14–23 are compositionally biased toward basic residues; the sequence is GAKRHSRKSN. A DNA-binding region spans residues 16-21; it reads KRHSRK.

Belongs to the histone H4 family. In terms of assembly, the nucleosome is a histone octamer containing two molecules each of H2A, H2B, H3 and H4 assembled in one H3-H4 heterotetramer and two H2A-H2B heterodimers. The octamer wraps approximately 147 bp of DNA.

The protein localises to the nucleus. It localises to the chromosome. In terms of biological role, core component of nucleosome. Nucleosomes wrap and compact DNA into chromatin, limiting DNA accessibility to the cellular machineries which require DNA as a template. Histones thereby play a central role in transcription regulation, DNA repair, DNA replication and chromosomal stability. DNA accessibility is regulated via a complex set of post-translational modifications of histones, also called histone code, and nucleosome remodeling. The sequence is that of Histone H4, minor from Tetrahymena pyriformis.